Here is a 303-residue protein sequence, read N- to C-terminus: Tumor necrosis factor receptor type 1-associated DEATH domain protein (303 aa).

The short motif at 141–157 is the Nuclear export signal element; that stretch reads QKDDELAEIDERLKSIK. Residues 208–298 enclose the Death domain; it reads TSAHIQHFAK…SIALDLLSLN (91 aa). Positions 224 to 237 match the Nuclear localization signal motif; it reads KPVGRSLGKTCRAL.

Heterodimer with tnfrsf1a.

Its subcellular location is the nucleus. The protein resides in the cytoplasm. It localises to the cytoskeleton. Adapter molecule for tnfrsf1a that specifically associates with the cytoplasmic domain of activated tnfrsf1a mediating its interaction with fadd. In Xenopus laevis (African clawed frog), this protein is Tumor necrosis factor receptor type 1-associated DEATH domain protein.